A 212-amino-acid polypeptide reads, in one-letter code: Phosphoribosylformylglycinamidine synthase subunit PurQ (212 aa).

The Glutamine amidotransferase type-1 domain maps to 2-212 (RIAVLKFPGT…WLGLISWLRR (211 aa)). C85 (nucleophile) is an active-site residue. Catalysis depends on residues H183, E185, and H191.

In terms of assembly, part of the FGAM synthase complex composed of 1 PurL, 1 PurQ and 2 PurS subunits.

The protein localises to the cytoplasm. It carries out the reaction N(2)-formyl-N(1)-(5-phospho-beta-D-ribosyl)glycinamide + L-glutamine + ATP + H2O = 2-formamido-N(1)-(5-O-phospho-beta-D-ribosyl)acetamidine + L-glutamate + ADP + phosphate + H(+). The catalysed reaction is L-glutamine + H2O = L-glutamate + NH4(+). Its pathway is purine metabolism; IMP biosynthesis via de novo pathway; 5-amino-1-(5-phospho-D-ribosyl)imidazole from N(2)-formyl-N(1)-(5-phospho-D-ribosyl)glycinamide: step 1/2. Part of the phosphoribosylformylglycinamidine synthase complex involved in the purines biosynthetic pathway. Catalyzes the ATP-dependent conversion of formylglycinamide ribonucleotide (FGAR) and glutamine to yield formylglycinamidine ribonucleotide (FGAM) and glutamate. The FGAM synthase complex is composed of three subunits. PurQ produces an ammonia molecule by converting glutamine to glutamate. PurL transfers the ammonia molecule to FGAR to form FGAM in an ATP-dependent manner. PurS interacts with PurQ and PurL and is thought to assist in the transfer of the ammonia molecule from PurQ to PurL. This is Phosphoribosylformylglycinamidine synthase subunit PurQ from Pyrobaculum aerophilum (strain ATCC 51768 / DSM 7523 / JCM 9630 / CIP 104966 / NBRC 100827 / IM2).